The following is a 373-amino-acid chain: C-C chemokine receptor type 2 (373 aa).

Residues 1 to 55 are Extracellular-facing; sequence MEDNNMLPQFIHGILSTSHSLFTRSIQELDEGATTPYDYDDGEPCHKTSVKQIGA. The chain crosses the membrane as a helical span at residues 56-83; the sequence is WILPPLYSLVFIFGFVGNMLVIIILIGC. Residues 84-93 lie on the Cytoplasmic side of the membrane; sequence KKLKSMTDIY. Residues 94–114 traverse the membrane as a helical segment; that stretch reads LLNLAISDLLFLLTLPFWAHY. The Extracellular portion of the chain corresponds to 115 to 127; sequence AANEWVFGNIMCK. Residues Cys-126 and Cys-203 are joined by a disulfide bond. A helical transmembrane segment spans residues 128–149; that stretch reads VFTGLYHIGYFGGIFFIILLTI. Over 150 to 166 the chain is Cytoplasmic; the sequence is DRYLAIVHAVFALKART. Position 152 is a phosphotyrosine; by JAK2 (Tyr-152). A helical transmembrane segment spans residues 167 to 191; that stretch reads VTFGVITSVVTWVVAVFASLPGIIF. Topologically, residues 192-219 are extracellular; that stretch reads TKSKQDDHHYTCGPYFTQLWKNFQTIMR. Residues 220 to 239 form a helical membrane-spanning segment; sequence NILSLILPLLVMVICYSGIL. Residues 240-256 are Cytoplasmic-facing; that stretch reads HTLFRCRNEKKRHRAVR. Residues 257–281 form a helical membrane-spanning segment; that stretch reads LIFAIMIVYFLFWTPYNIVLFLTTF. At 282–298 the chain is on the extracellular side; the sequence is QESLGMSNCVIDKHLDQ. Residues 299-322 traverse the membrane as a helical segment; the sequence is AMQVTETLGMTHCCINPVIYAFVG. Over 323-373 the chain is Cytoplasmic; it reads EKFRRYLSIFFRKHIAKRLCKQCPVFYRETADRVSSTFTPSTGEQEVSVGL.

This sequence belongs to the G-protein coupled receptor 1 family. In terms of assembly, interacts with ARRB1. Interacts (via extracellular N-terminal region) with beta-defensin DEFB106A/DEFB106B; this interaction may preferentially require specific tyrosine sulfation on CCR2. Interacts with NUP85; the interaction is required for CCR2 clusters formation on the cell membrane and CCR2 signaling. Post-translationally, N-glycosylated. Sulfation increases the affinity for both monomeric and dimeric CCL2 with stronger binding to the monomeric form. Binding of sulfated CCR2 to CCL2 promotes conversion of CCL2 from dimer to monomer. In terms of tissue distribution, epressed in mature thymocytes. Detected in monocyte/macrophage cell lines, but not in nonhematopoietic cell lines.

The protein localises to the cell membrane. Functionally, key functional receptor for CCL2 but can also bind CCL7 and CCL12 chemokines. Its binding with CCL2 on monocytes and macrophages mediates chemotaxis and migration induction through the activation of the PI3K cascade, the small G protein Rac and lamellipodium protrusion. Also acts as a receptor for the beta-defensin DEFB106A/DEFB106B. Regulates the expression of T-cell inflammatory cytokines and T-cell differentiation, promoting the differentiation of T-cells into T-helper 17 cells (Th17) during inflammation. Facilitates the export of mature thymocytes by enhancing directional movement of thymocytes to sphingosine-1-phosphate stimulation and up-regulation of S1P1R expression; signals through the JAK-STAT pathway to regulate FOXO1 activity leading to an increased expression of S1P1R. Plays an important role in mediating peripheral nerve injury-induced neuropathic pain. Increases NMDA-mediated synaptic transmission in both dopamine D1 and D2 receptor-containing neurons, which may be caused by MAPK/ERK-dependent phosphorylation of GRIN2B/NMDAR2B. Mediates the recruitment of macrophages and monocytes to the injury site following brain injury. This chain is C-C chemokine receptor type 2 (Ccr2), found in Mus musculus (Mouse).